The sequence spans 202 residues: MTSTVGTLGTAITSRVHSLNRPNMVSVGTVVWLSSELMFFAGLFAMYFTARAQAGGKWPPSTELNLYQAVPVTLVLIASSFTCQMGVFSAERGDVFGLRRWYVITLLMGLFFVLGQGYEYYHLITHGTTIPSSAYGSVFYLATGFHGLHVTGGLIAFIFLLARTTMSKFTPAQATASIVVSYYWHFVDIVWIALFTVIYFIR.

5 helical membrane passes run 30–50, 69–89, 101–121, 141–161, and 178–198; these read VVWL…YFTA, AVPV…GVFS, WYVI…YEYY, LATG…IFLL, and IVVS…FTVI.

It belongs to the cytochrome c oxidase subunit 3 family.

The protein localises to the cell membrane. It carries out the reaction 4 Fe(II)-[cytochrome c] + O2 + 8 H(+)(in) = 4 Fe(III)-[cytochrome c] + 2 H2O + 4 H(+)(out). In Mycobacterium leprae (strain TN), this protein is Probable cytochrome c oxidase subunit 3 (ctaE).